The primary structure comprises 224 residues: tRNA (guanine-N(7)-)-methyltransferase (224 aa).

S-adenosyl-L-methionine-binding residues include E54, E79, E106, and D129. The active site involves D129. Substrate is bound by residues K133 and D165.

This sequence belongs to the class I-like SAM-binding methyltransferase superfamily. TrmB family.

The catalysed reaction is guanosine(46) in tRNA + S-adenosyl-L-methionine = N(7)-methylguanosine(46) in tRNA + S-adenosyl-L-homocysteine. It functions in the pathway tRNA modification; N(7)-methylguanine-tRNA biosynthesis. Its function is as follows. Catalyzes the formation of N(7)-methylguanine at position 46 (m7G46) in tRNA. This chain is tRNA (guanine-N(7)-)-methyltransferase, found in Chlamydia abortus (strain DSM 27085 / S26/3) (Chlamydophila abortus).